Here is a 401-residue protein sequence, read N- to C-terminus: uncharacterized protein (401 aa).

4 residues coordinate [4Fe-4S] cluster: Cys7, Cys13, Cys16, and Cys94. Residues Gln230, Tyr259, Glu280, and Asp328 each coordinate S-adenosyl-L-methionine. Cys355 (nucleophile) is an active-site residue.

The protein belongs to the class I-like SAM-binding methyltransferase superfamily. RNA M5U methyltransferase family.

This is an uncharacterized protein from Chlamydia caviae (strain ATCC VR-813 / DSM 19441 / 03DC25 / GPIC) (Chlamydophila caviae).